A 53-amino-acid polypeptide reads, in one-letter code: Rubredoxin (53 aa).

A Rubredoxin-like domain is found at 1–53 (MQKYVCDICGYVYDPAVGDPDNGVAPGTAFADLPEDWVCPECGVSKDEFSPEA). Fe cation contacts are provided by C6, C9, C39, and C42.

Belongs to the rubredoxin family. Fe(3+) serves as cofactor.

Functionally, rubredoxin is a small nonheme, iron protein lacking acid-labile sulfide. Its single Fe, chelated to 4 Cys, functions as an electron acceptor and may also stabilize the conformation of the molecule. In Butyribacterium methylotrophicum, this protein is Rubredoxin.